The primary structure comprises 289 residues: Bis(5'-nucleosyl)-tetraphosphatase, symmetrical (289 aa).

It belongs to the Ap4A hydrolase family.

The catalysed reaction is P(1),P(4)-bis(5'-adenosyl) tetraphosphate + H2O = 2 ADP + 2 H(+). In terms of biological role, hydrolyzes diadenosine 5',5'''-P1,P4-tetraphosphate to yield ADP. This chain is Bis(5'-nucleosyl)-tetraphosphatase, symmetrical, found in Yersinia pseudotuberculosis serotype IB (strain PB1/+).